The primary structure comprises 248 residues: Anamorsin homolog (248 aa).

The N-terminal SAM-like domain stretch occupies residues 4-129 (FKGLQKSLYI…ETGSSARLSF (126 aa)). Residues 130-161 (AKKNASAVNVWKISGDDEELIDEEELLDEEDK) form a linker region. [2Fe-2S] cluster is bound by residues C172, C181, C184, and C186. Positions 172 to 186 (CSTTGKRKACKNCSC) are fe-S binding site A. [4Fe-4S] cluster is bound by residues C209, C212, C220, and C223. Short sequence motifs (cx2C motif) lie at residues 209 to 212 (CGNC) and 220 to 223 (CSTC). The fe-S binding site B stretch occupies residues 209–223 (CGNCYLGDAFRCSTC).

The protein belongs to the anamorsin family. As to quaternary structure, monomer. The cofactor is [2Fe-2S] cluster. [4Fe-4S] cluster serves as cofactor.

Its subcellular location is the cytoplasm. It is found in the mitochondrion intermembrane space. Component of the cytosolic iron-sulfur (Fe-S) protein assembly (CIA) machinery. Required for the maturation of extramitochondrial Fe-S proteins. Part of an electron transfer chain functioning in an early step of cytosolic Fe-S biogenesis, facilitating the de novo assembly of a [4Fe-4S] cluster on the cytosolic Fe-S scaffold complex. Electrons are transferred from NADPH via a FAD- and FMN-containing diflavin oxidoreductase. Together with the diflavin oxidoreductase, also required for the assembly of the diferric tyrosyl radical cofactor of ribonucleotide reductase (RNR), probably by providing electrons for reduction during radical cofactor maturation in the catalytic small subunit. The protein is Anamorsin homolog of Drosophila melanogaster (Fruit fly).